Here is a 457-residue protein sequence, read N- to C-terminus: Tryptophan aminotransferase-related protein 3 (457 aa).

The helical transmembrane segment at 6–26 (LLIAGSIILNLVFTIHILYNN) threads the bilayer. Residues Tyr123, 163 to 164 (AT), Asn237, 257 to 260 (DYAY), 280 to 283 (SLSK), and Arg291 contribute to the pyridoxal 5'-phosphate site. Position 283 is an N6-(pyridoxal phosphate)lysine (Lys283).

The protein belongs to the alliinase family. Pyridoxal 5'-phosphate is required as a cofactor.

It localises to the membrane. Probable aminotransferase. This is Tryptophan aminotransferase-related protein 3 (TAR3) from Arabidopsis thaliana (Mouse-ear cress).